A 157-amino-acid polypeptide reads, in one-letter code: Protein-export protein SecB (157 aa).

It belongs to the SecB family. As to quaternary structure, homotetramer, a dimer of dimers. One homotetramer interacts with 1 SecA dimer.

The protein localises to the cytoplasm. One of the proteins required for the normal export of preproteins out of the cell cytoplasm. It is a molecular chaperone that binds to a subset of precursor proteins, maintaining them in a translocation-competent state. It also specifically binds to its receptor SecA. This chain is Protein-export protein SecB, found in Dichelobacter nodosus (strain VCS1703A).